Here is a 165-residue protein sequence, read N- to C-terminus: Phosphopantetheine adenylyltransferase (165 aa).

Position 9 (Thr-9) interacts with substrate. Residues Thr-9 to Phe-10 and His-17 each bind ATP. Substrate contacts are provided by Lys-41, Leu-73, and Arg-87. ATP contacts are provided by residues Gly-88–Arg-90, Glu-98, and Tyr-123–Thr-129.

It belongs to the bacterial CoaD family. As to quaternary structure, homohexamer. Mg(2+) is required as a cofactor.

The protein resides in the cytoplasm. It carries out the reaction (R)-4'-phosphopantetheine + ATP + H(+) = 3'-dephospho-CoA + diphosphate. The protein operates within cofactor biosynthesis; coenzyme A biosynthesis; CoA from (R)-pantothenate: step 4/5. In terms of biological role, reversibly transfers an adenylyl group from ATP to 4'-phosphopantetheine, yielding dephospho-CoA (dPCoA) and pyrophosphate. The polypeptide is Phosphopantetheine adenylyltransferase (Nitrosospira multiformis (strain ATCC 25196 / NCIMB 11849 / C 71)).